Reading from the N-terminus, the 305-residue chain is Diacylglycerol kinase (305 aa).

A DAGKc domain is found at 1–132 (MRKRARIIYN…VDIGKMNSRY (132 aa)). ATP-binding positions include 10–14 (NPTSG), T41, 67–73 (GDGTLNE), and T94. The Mg(2+) site is built by K213, D216, and Y218. The active-site Proton acceptor is the E273.

The protein belongs to the diacylglycerol/lipid kinase family. As to quaternary structure, homodimer. Mg(2+) serves as cofactor.

The catalysed reaction is a 1,2-diacyl-sn-glycerol + ATP = a 1,2-diacyl-sn-glycero-3-phosphate + ADP + H(+). Functionally, catalyzes the phosphorylation of diacylglycerol (DAG) into phosphatidic acid. Is a key enzyme involved in the production of lipoteichoic acid by reintroducing DAG formed from the breakdown of membrane phospholipids into the phosphatidylglycerol biosynthetic pathway. The polypeptide is Diacylglycerol kinase (dagK) (Staphylococcus saprophyticus subsp. saprophyticus (strain ATCC 15305 / DSM 20229 / NCIMB 8711 / NCTC 7292 / S-41)).